Consider the following 547-residue polypeptide: Heme-binding protein A (547 aa).

Residues 1-18 form the signal peptide; it reads MKLKATLTLAAATLVLAA. Cysteine 19 carries the N-palmitoyl cysteine lipid modification. Cysteine 19 carries S-diacylglycerol cysteine lipidation.

The protein belongs to the bacterial solute-binding protein 5 family.

It localises to the cell inner membrane. Important role in heme acquisition or metabolism. In Haemophilus influenzae (strain ATCC 51907 / DSM 11121 / KW20 / Rd), this protein is Heme-binding protein A (hbpA).